The primary structure comprises 345 residues: Holliday junction branch migration complex subunit RuvB (345 aa).

Positions 1 to 183 are large ATPase domain (RuvB-L); it reads MTTQRLVSAA…FGIVHRLEFY (183 aa). ATP is bound by residues Ile22, Arg23, Gly64, Lys67, Thr68, Thr69, 130–132, Arg173, Tyr183, and Arg220; that span reads EDY. Thr68 is a Mg(2+) binding site. Residues 184–254 are small ATPAse domain (RuvB-S); sequence SVEELSRIVA…VAGKALEMLD (71 aa). The tract at residues 257–345 is head domain (RuvB-H); sequence PNGFDQSDRR…NVNEELFGDE (89 aa). 3 residues coordinate DNA: Arg293, Arg312, and Arg317.

This sequence belongs to the RuvB family. As to quaternary structure, homohexamer. Forms an RuvA(8)-RuvB(12)-Holliday junction (HJ) complex. HJ DNA is sandwiched between 2 RuvA tetramers; dsDNA enters through RuvA and exits via RuvB. An RuvB hexamer assembles on each DNA strand where it exits the tetramer. Each RuvB hexamer is contacted by two RuvA subunits (via domain III) on 2 adjacent RuvB subunits; this complex drives branch migration. In the full resolvosome a probable DNA-RuvA(4)-RuvB(12)-RuvC(2) complex forms which resolves the HJ.

The protein resides in the cytoplasm. The enzyme catalyses ATP + H2O = ADP + phosphate + H(+). Functionally, the RuvA-RuvB-RuvC complex processes Holliday junction (HJ) DNA during genetic recombination and DNA repair, while the RuvA-RuvB complex plays an important role in the rescue of blocked DNA replication forks via replication fork reversal (RFR). RuvA specifically binds to HJ cruciform DNA, conferring on it an open structure. The RuvB hexamer acts as an ATP-dependent pump, pulling dsDNA into and through the RuvAB complex. RuvB forms 2 homohexamers on either side of HJ DNA bound by 1 or 2 RuvA tetramers; 4 subunits per hexamer contact DNA at a time. Coordinated motions by a converter formed by DNA-disengaged RuvB subunits stimulates ATP hydrolysis and nucleotide exchange. Immobilization of the converter enables RuvB to convert the ATP-contained energy into a lever motion, pulling 2 nucleotides of DNA out of the RuvA tetramer per ATP hydrolyzed, thus driving DNA branch migration. The RuvB motors rotate together with the DNA substrate, which together with the progressing nucleotide cycle form the mechanistic basis for DNA recombination by continuous HJ branch migration. Branch migration allows RuvC to scan DNA until it finds its consensus sequence, where it cleaves and resolves cruciform DNA. This Methylococcus capsulatus (strain ATCC 33009 / NCIMB 11132 / Bath) protein is Holliday junction branch migration complex subunit RuvB.